The sequence spans 431 residues: tRNA(Ile)-lysidine synthase (431 aa).

19-24 contributes to the ATP binding site; that stretch reads STGIDS.

Belongs to the tRNA(Ile)-lysidine synthase family.

The protein localises to the cytoplasm. The catalysed reaction is cytidine(34) in tRNA(Ile2) + L-lysine + ATP = lysidine(34) in tRNA(Ile2) + AMP + diphosphate + H(+). Functionally, ligates lysine onto the cytidine present at position 34 of the AUA codon-specific tRNA(Ile) that contains the anticodon CAU, in an ATP-dependent manner. Cytidine is converted to lysidine, thus changing the amino acid specificity of the tRNA from methionine to isoleucine. In Staphylococcus aureus (strain COL), this protein is tRNA(Ile)-lysidine synthase.